A 37-amino-acid polypeptide reads, in one-letter code: Delta-amaurobitoxin-Pl1b (37 aa).

4 disulfide bridges follow: cysteine 2–cysteine 18, cysteine 9–cysteine 23, cysteine 17–cysteine 33, and cysteine 25–cysteine 31. Serine 37 carries the post-translational modification Serine amide.

This sequence belongs to the neurotoxin 07 (Beta/delta-agtx) family. 02 (aga-3) subfamily. Expressed by the venom gland.

It is found in the secreted. Functionally, insecticidal toxin. Binds to site 4 of insect voltage-gated sodium channel (Nav) and inhibits channel inactivation. In vivo, it lethal to lepidopteran larvae. Has no adverse affects when intracerebroventricularly injected in mice at a dose of 0.2 ug, but causes reversible paralysis of legs when injected intracerebroventricularly in mice at a dose of 2.0 ug. The sequence is that of Delta-amaurobitoxin-Pl1b from Pireneitega luctuosa (Tangled nest spider).